The primary structure comprises 214 residues: tRNA (guanine-N(7)-)-methyltransferase (214 aa).

4 residues coordinate S-adenosyl-L-methionine: glutamate 45, glutamate 70, aspartate 97, and aspartate 119. Residue aspartate 119 is part of the active site. Substrate-binding positions include lysine 123, aspartate 155, and 192–195 (TEYE).

This sequence belongs to the class I-like SAM-binding methyltransferase superfamily. TrmB family.

The enzyme catalyses guanosine(46) in tRNA + S-adenosyl-L-methionine = N(7)-methylguanosine(46) in tRNA + S-adenosyl-L-homocysteine. Its pathway is tRNA modification; N(7)-methylguanine-tRNA biosynthesis. In terms of biological role, catalyzes the formation of N(7)-methylguanine at position 46 (m7G46) in tRNA. This chain is tRNA (guanine-N(7)-)-methyltransferase, found in Clostridioides difficile (strain 630) (Peptoclostridium difficile).